The chain runs to 263 residues: Endonuclease 8 (263 aa).

Pro2 functions as the Schiff-base intermediate with DNA in the catalytic mechanism. Glu3 serves as the catalytic Proton donor. Lys53 acts as the Proton donor; for beta-elimination activity in catalysis. The DNA site is built by Gln70, Arg125, and Asn169. The segment at 229 to 263 (KVFHRDGELCERCGGIIEKTTLSSRPFYWCPGCQH) adopts an FPG-type zinc-finger fold. Residue Arg253 is the Proton donor; for delta-elimination activity of the active site.

Belongs to the FPG family. It depends on Zn(2+) as a cofactor.

The catalysed reaction is 2'-deoxyribonucleotide-(2'-deoxyribose 5'-phosphate)-2'-deoxyribonucleotide-DNA = a 3'-end 2'-deoxyribonucleotide-(2,3-dehydro-2,3-deoxyribose 5'-phosphate)-DNA + a 5'-end 5'-phospho-2'-deoxyribonucleoside-DNA + H(+). Its function is as follows. Involved in base excision repair of DNA damaged by oxidation or by mutagenic agents. Acts as a DNA glycosylase that recognizes and removes damaged bases. Has a preference for oxidized pyrimidines, such as thymine glycol, 5,6-dihydrouracil and 5,6-dihydrothymine. Has AP (apurinic/apyrimidinic) lyase activity and introduces nicks in the DNA strand. Cleaves the DNA backbone by beta-delta elimination to generate a single-strand break at the site of the removed base with both 3'- and 5'-phosphates. This is Endonuclease 8 from Escherichia coli O7:K1 (strain IAI39 / ExPEC).